The sequence spans 256 residues: uncharacterized protein (256 aa).

This is an uncharacterized protein from Bacillus subtilis (strain 168).